We begin with the raw amino-acid sequence, 411 residues long: L-cysteine:1D-myo-inositol 2-amino-2-deoxy-alpha-D-glucopyranoside ligase (411 aa).

Residue Cys43 participates in Zn(2+) binding. L-cysteinyl-5'-AMP is bound by residues 43–46, Thr58, and 81–83; these read CGIT and NVT. The 'HIGH' region motif lies at 45-55; that stretch reads ITPYDATHLGH. The short motif at 186–191 is the 'ERGGDP' region element; that stretch reads QRGGDP. Trp226 is an L-cysteinyl-5'-AMP binding site. Cys230 provides a ligand contact to Zn(2+). 248-250 provides a ligand contact to L-cysteinyl-5'-AMP; the sequence is GSD. His255 is a binding site for Zn(2+). Residue Ile282 coordinates L-cysteinyl-5'-AMP. A 'KMSKS' region motif is present at residues 288 to 292; the sequence is KMSKS.

The protein belongs to the class-I aminoacyl-tRNA synthetase family. MshC subfamily. In terms of assembly, monomer. Zn(2+) is required as a cofactor.

The catalysed reaction is 1D-myo-inositol 2-amino-2-deoxy-alpha-D-glucopyranoside + L-cysteine + ATP = 1D-myo-inositol 2-(L-cysteinylamino)-2-deoxy-alpha-D-glucopyranoside + AMP + diphosphate + H(+). Its function is as follows. Catalyzes the ATP-dependent condensation of GlcN-Ins and L-cysteine to form L-Cys-GlcN-Ins. The chain is L-cysteine:1D-myo-inositol 2-amino-2-deoxy-alpha-D-glucopyranoside ligase from Mycobacterium marinum (strain ATCC BAA-535 / M).